The following is a 253-amino-acid chain: 3-isopropylmalate dehydratase small subunit 3 (253 aa).

Residues 1–56 constitute a chloroplast transit peptide; sequence MATSQQFLNPTLFKSLASSNKNSCTLCPSPFLQLKSASTIFNYKPLTSSSATIITR.

The protein belongs to the LeuD family. As to quaternary structure, heterodimer of the large LEUC/IIL1 subunit and the small LEUD (SSU1, SSU2 or SSU3) subunits. As to expression, expressed in vascular bundles of roots, cotyledons and rosette leaves. Expressed in stem vascular bundles which branche off into lateral inflorescences. Expressed in connective tissues in anthers. In hypocotyls, expressed in parenchyma cells surrounding the vasculature. In rosette leaves, expressed in phloem cells and cells close to the xylem along the vascular bundles. In roots of adult plants, expressed in cells closely associated with the stele. In flowering stalks, expressed in parenchyma cells associated with the phloem or the xylem.

The protein resides in the plastid. The protein localises to the chloroplast stroma. The enzyme catalyses (2R,3S)-3-isopropylmalate = (2S)-2-isopropylmalate. The catalysed reaction is a 2-(omega-methylsulfanyl)alkylmalate = a 2-(omega-methylsulfanyl)alkylmaleate + H2O. It catalyses the reaction 2-(3-methylsulfanyl)propylmalate = 2-(2-methylsulfanyl)propylmaleate + H2O. It carries out the reaction a 3-(omega-methylsulfanyl)alkylmalate = a 2-(omega-methylsulfanyl)alkylmaleate + H2O. The enzyme catalyses 2-(2-methylsulfanyl)ethylmalate = 2-(2-methylsulfanyl)ethylmaleate + H2O. The catalysed reaction is 3-(2-methylsulfanyl)ethylmalate = 2-(2-methylsulfanyl)ethylmaleate + H2O. It catalyses the reaction 3-(3-methylsulfanyl)propylmalate = 2-(2-methylsulfanyl)propylmaleate + H2O. The protein operates within amino-acid biosynthesis; L-leucine biosynthesis; L-leucine from 3-methyl-2-oxobutanoate: step 2/4. Functionally, catalyzes the isomerization between 2-isopropylmalate and 3-isopropylmalate, via the formation of 2-isopropylmaleate. Functions redundantly with LEUD1 in the methionine chain elongation pathway of aliphatic glucosinolate formation. This Arabidopsis thaliana (Mouse-ear cress) protein is 3-isopropylmalate dehydratase small subunit 3.